A 385-amino-acid chain; its full sequence is Transcription factor-like protein DPB (385 aa).

Disordered stretches follow at residues 1-53 (MTTT…EQTI) and 71-102 (DIQG…KTGR). A compositionally biased stretch (polar residues) spans 22-31 (PSTRSWGTAV). Over residues 32–53 (SGQSVSTSGSMGSPSSRSEQTI) the composition is skewed to low complexity. The DNA-binding element occupies 101–184 (GRGLRQFSMK…KKEIQWRGLP (84 aa)). Residues 150 to 184 (DEKNIRRRVYDALNVLMAMDIISKDKKEIQWRGLP) carry the DEF box motif. A coiled-coil region spans residues 185–234 (RTSLSDIEELKNERLSLRNRIEKKTAYSQELEEQYVGLQNLIQRNEHLYS). The disordered stretch occupies residues 296 to 385 (PPQQPNGRNN…IMNSSMKPEN (90 aa)). The span at 300 to 327 (PNGRNNSQLVCHNFTPENPNKGPSTGPT) shows a compositional bias: polar residues. Low complexity predominate over residues 336–349 (HLQSQQHQQHSQLQ). Over residues 355–364 (ETNNVTSSAD) the composition is skewed to polar residues.

It belongs to the E2F/DP family. As to quaternary structure, heterodimer with non-phosphorylated E2FC. No interaction with phosphorylated E2FC. Interacts preferentially with E2FC, but also with E2FA and E2FB. Interacts with SKP2A. Targeted for proteasomal degradation by the SCF(SKP2A) E3 ubiquitin ligase complex. Phosphorylated. Ubiquitous.

It is found in the nucleus. It localises to the cytoplasm. In terms of biological role, involved in the regulation of the G1/S transition. Increases the DNA binding activity of E2F proteins after heterodimerization. The complex DPB/E2FC restricts cell division and lateral root initiation and may function as a negative regulator of E2F-regulated genes. The interaction with SKP2A is controlled by auxin. The chain is Transcription factor-like protein DPB (DPB) from Arabidopsis thaliana (Mouse-ear cress).